Consider the following 329-residue polypeptide: Beta-1,3-galactosyltransferase 6 (329 aa).

Topologically, residues 1 to 11 are cytoplasmic; that stretch reads MKLLRRAWRRR. The helical; Signal-anchor for type II membrane protein transmembrane segment at 12–34 threads the bilayer; it reads AALGLGTLALCGAALLYLARCAA. Over 35-329 the chain is Lumenal; the sequence is EPGDPRAMSG…QCCQRREGIP (295 aa). Asparagine 131 is a glycosylation site (N-linked (GlcNAc...) asparagine).

It belongs to the glycosyltransferase 31 family. Mn(2+) serves as cofactor. Ubiquitous.

The protein resides in the golgi apparatus. It is found in the golgi stack membrane. The catalysed reaction is 3-O-(beta-D-galactosyl-(1-&gt;4)-beta-D-xylosyl)-L-seryl-[protein] + UDP-alpha-D-galactose = 3-O-(beta-D-galactosyl-(1-&gt;3)-beta-D-galactosyl-(1-&gt;4)-beta-D-xylosyl)-L-seryl-[protein] + UDP + H(+). The protein operates within glycan metabolism; chondroitin sulfate biosynthesis. It participates in glycan metabolism; heparan sulfate biosynthesis. In terms of biological role, beta-1,3-galactosyltransferase that transfers galactose from UDP-galactose to substrates with a terminal beta-linked galactose residue. Has a preference for galactose-beta-1,4-xylose that is found in the linker region of glycosaminoglycans, such as heparan sulfate and chondroitin sulfate. Has no activity towards substrates with terminal glucosamine or galactosamine residues. The polypeptide is Beta-1,3-galactosyltransferase 6 (B3GALT6) (Homo sapiens (Human)).